We begin with the raw amino-acid sequence, 285 residues long: 4-diphosphocytidyl-2-C-methyl-D-erythritol kinase (285 aa).

The active site involves K12. 95 to 105 (PMGGGVGGGSS) is a binding site for ATP. Residue D137 is part of the active site.

This sequence belongs to the GHMP kinase family. IspE subfamily.

The catalysed reaction is 4-CDP-2-C-methyl-D-erythritol + ATP = 4-CDP-2-C-methyl-D-erythritol 2-phosphate + ADP + H(+). Its pathway is isoprenoid biosynthesis; isopentenyl diphosphate biosynthesis via DXP pathway; isopentenyl diphosphate from 1-deoxy-D-xylulose 5-phosphate: step 3/6. Catalyzes the phosphorylation of the position 2 hydroxy group of 4-diphosphocytidyl-2C-methyl-D-erythritol. The chain is 4-diphosphocytidyl-2-C-methyl-D-erythritol kinase from Actinobacillus pleuropneumoniae serotype 7 (strain AP76).